The sequence spans 505 residues: Maturase K (505 aa).

The protein belongs to the intron maturase 2 family. MatK subfamily.

It is found in the plastid. The protein localises to the chloroplast. Its function is as follows. Usually encoded in the trnK tRNA gene intron. Probably assists in splicing its own and other chloroplast group II introns. The chain is Maturase K from Nuphar advena (Common spatterdock).